The following is a 345-amino-acid chain: Ferrochelatase (345 aa).

Fe cation is bound by residues His-215 and Glu-296.

This sequence belongs to the ferrochelatase family.

The protein resides in the cytoplasm. The catalysed reaction is heme b + 2 H(+) = protoporphyrin IX + Fe(2+). The protein operates within porphyrin-containing compound metabolism; protoheme biosynthesis; protoheme from protoporphyrin-IX: step 1/1. In terms of biological role, catalyzes the ferrous insertion into protoporphyrin IX. The protein is Ferrochelatase of Nitrobacter hamburgensis (strain DSM 10229 / NCIMB 13809 / X14).